The following is a 238-amino-acid chain: tRNA (guanine-N(7)-)-methyltransferase (238 aa).

S-adenosyl-L-methionine contacts are provided by glutamate 68, glutamate 93, aspartate 120, and aspartate 143. Residue aspartate 143 is part of the active site. Substrate is bound by residues lysine 147, aspartate 179, and 216-219 (TKFE).

The protein belongs to the class I-like SAM-binding methyltransferase superfamily. TrmB family.

The catalysed reaction is guanosine(46) in tRNA + S-adenosyl-L-methionine = N(7)-methylguanosine(46) in tRNA + S-adenosyl-L-homocysteine. Its pathway is tRNA modification; N(7)-methylguanine-tRNA biosynthesis. In terms of biological role, catalyzes the formation of N(7)-methylguanine at position 46 (m7G46) in tRNA. This Shewanella denitrificans (strain OS217 / ATCC BAA-1090 / DSM 15013) protein is tRNA (guanine-N(7)-)-methyltransferase.